The chain runs to 524 residues: Zinc finger protein GLIS2 (524 aa).

Residues 35–174 (ALHRELGLVD…PKQLVCRWAK (140 aa)) are interaction with CTNND1. Disordered stretches follow at residues 39–62 (ELGL…FLLN) and 84–114 (SPPS…VPSA). The transcription activation stretch occupies residues 71 to 137 (GRFSAAPLVD…SSFQFFLPLG (67 aa)). The segment covering 84–100 (SPPSGLDSPNGSSSLSP) has biased composition (low complexity). Residues 148–171 (SFLTPPKDKCLSPDLPLPKQLVCR) form a transcription repression region. A C2H2-type 1 zinc finger spans residues 168–193 (LVCRWAKCNQLFELLQDLVDHVNDYH). The segment at 202-229 (YCCHWEGCARHGRGFNARYKMLIHIRTH) adopts a C2H2-type 2; atypical zinc-finger fold. C2H2-type zinc fingers lie at residues 235–257 (HRCP…NRSH), 263–287 (YVCP…TRTH), and 293–317 (YYCK…IKAH). The segment at 439–480 (GGKAEGEKGRGSVPTRALGMEGHKTPLERTESSCSRPSPDGL) is disordered. Basic and acidic residues predominate over residues 459-469 (EGHKTPLERTE).

This sequence belongs to the GLI C2H2-type zinc-finger protein family. Interacts with CTBP1 and HDAC3. Interacts with CTNNB1. Interacts with SUFU. Interacts with CTNND1. C-terminus cleavage is induced by interaction with CTNND1 and enhanced by Src tyrosine kinase. In terms of tissue distribution, expressed at high levels in kidney and at low levels in heart, lung and placenta. Expressed in colon.

It localises to the nucleus speckle. It is found in the cytoplasm. In terms of biological role, can act either as a transcriptional repressor or as a transcriptional activator, depending on the cell context. Acts as a repressor of the Hedgehog signaling pathway. Represses the Hedgehog-dependent expression of Wnt4. Necessary to maintain the differentiated epithelial phenotype in renal cells through the inhibition of SNAI1, which itself induces the epithelial-to-mesenchymal transition. Represses transcriptional activation mediated by CTNNB1 in the Wnt signaling pathway. May act by recruiting the corepressors CTBP1 and HDAC3. May be involved in neuron differentiation. This is Zinc finger protein GLIS2 (GLIS2) from Homo sapiens (Human).